Reading from the N-terminus, the 158-residue chain is uncharacterized protein (158 aa).

4 helical membrane passes run 42–62 (FHFAVIVITMLAYLSAFGFLY), 71–91 (WIFIGFLGSMVINAIFPHLIA), 102–122 (LLTGLLLNIPVNSLVIYQMFL), and 130–150 (ELIISTLVVGIILLALIPLLF).

The protein localises to the cell membrane. This is an uncharacterized protein from Bacillus subtilis (strain 168).